The chain runs to 490 residues: Probable cytosol aminopeptidase (490 aa).

Mn(2+)-binding residues include Lys-258 and Asp-263. Lys-270 is an active-site residue. Residues Asp-282, Asp-341, and Glu-343 each contribute to the Mn(2+) site. Arg-345 is an active-site residue.

The protein belongs to the peptidase M17 family. Mn(2+) serves as cofactor.

The protein resides in the cytoplasm. It catalyses the reaction Release of an N-terminal amino acid, Xaa-|-Yaa-, in which Xaa is preferably Leu, but may be other amino acids including Pro although not Arg or Lys, and Yaa may be Pro. Amino acid amides and methyl esters are also readily hydrolyzed, but rates on arylamides are exceedingly low.. The catalysed reaction is Release of an N-terminal amino acid, preferentially leucine, but not glutamic or aspartic acids.. Presumably involved in the processing and regular turnover of intracellular proteins. Catalyzes the removal of unsubstituted N-terminal amino acids from various peptides. This is Probable cytosol aminopeptidase from Microcystis aeruginosa (strain NIES-843 / IAM M-2473).